Here is a 364-residue protein sequence, read N- to C-terminus: Spermidine/putrescine import ATP-binding protein PotA (364 aa).

The ABC transporter domain occupies 5-235 (LSFKDVSKGF…PVNRFVADFI (231 aa)). An ATP-binding site is contributed by 37-44 (GPSGCGKT).

This sequence belongs to the ABC transporter superfamily. Spermidine/putrescine importer (TC 3.A.1.11.1) family. In terms of assembly, the complex is composed of two ATP-binding proteins (PotA), two transmembrane proteins (PotB and PotC) and a solute-binding protein (PotD).

The protein resides in the cell membrane. It carries out the reaction ATP + H2O + polyamine-[polyamine-binding protein]Side 1 = ADP + phosphate + polyamineSide 2 + [polyamine-binding protein]Side 1.. Part of the ABC transporter complex PotABCD involved in spermidine/putrescine import. Responsible for energy coupling to the transport system. The chain is Spermidine/putrescine import ATP-binding protein PotA from Staphylococcus epidermidis (strain ATCC 12228 / FDA PCI 1200).